Consider the following 209-residue polypeptide: Outer-membrane lipoprotein carrier protein (209 aa).

The signal sequence occupies residues 1–21; that stretch reads MHRQLRYAVLATALFASTAFA.

The protein belongs to the LolA family. In terms of assembly, monomer.

The protein localises to the periplasm. In terms of biological role, participates in the translocation of lipoproteins from the inner membrane to the outer membrane. Only forms a complex with a lipoprotein if the residue after the N-terminal Cys is not an aspartate (The Asp acts as a targeting signal to indicate that the lipoprotein should stay in the inner membrane). In Xanthomonas campestris pv. campestris (strain 8004), this protein is Outer-membrane lipoprotein carrier protein.